A 146-amino-acid chain; its full sequence is MORN repeat-containing protein 4 (146 aa).

MORN repeat units lie at residues Tyr-16 to Thr-38, Tyr-39 to Arg-61, Tyr-62 to Thr-84, and Phe-85 to His-107.

As to quaternary structure, interacts with MYO3A.

It is found in the cytoplasm. Its subcellular location is the cell projection. The protein resides in the filopodium tip. It localises to the stereocilium. In terms of biological role, plays a role in promoting axonal degeneration following neuronal injury by toxic insult or trauma. The chain is MORN repeat-containing protein 4 (Morn4) from Mus musculus (Mouse).